Consider the following 297-residue polypeptide: MRDYADNDSILLKHGWCEMLKGGVIMDVKNVEQAKIAEKAGAIGVMILENIPSELRNTDGVARSVDPLKIEEIRKCISINVLAKVRIGHFVEAQILEELKVDMLDESEVLTMADEYNHINKHKFKTPFVCGCTNLGEALRRISEGASMIRTKGEAGTGNIIEAIKHIRTVNNEIKYLCSLDESEVYNFAKKLRAPIDLILLTRKLKRLPVVNFAAGGIATPADAAMCMQLGMDGVFVGSGIFESENPQKMASSIVMAVSNFNNPKILLNVSLGLGKAMHGNTKVSNKWKNKSEEDNS.

Aspartate 27 contacts D-ribose 5-phosphate. Lysine 84 serves as the catalytic Schiff-base intermediate with D-ribose 5-phosphate. Glycine 156 contributes to the D-ribose 5-phosphate binding site. Arginine 168 is a D-glyceraldehyde 3-phosphate binding site. D-ribose 5-phosphate is bound by residues glycine 217 and glycine 238 to serine 239.

Belongs to the PdxS/SNZ family. As to quaternary structure, homohexamer and homododecamer. In the presence of Pdx2, forms a dodecamer of heterodimers.

It carries out the reaction aldehydo-D-ribose 5-phosphate + D-glyceraldehyde 3-phosphate + L-glutamine = pyridoxal 5'-phosphate + L-glutamate + phosphate + 3 H2O + H(+). The protein operates within cofactor biosynthesis; pyridoxal 5'-phosphate biosynthesis. Its function is as follows. Catalyzes the formation of pyridoxal 5'-phosphate from ribose 5-phosphate (RBP), glyceraldehyde 3-phosphate (G3P) and ammonia. The ammonia is provided by Pdx2. Can also use ribulose 5-phosphate and dihydroxyacetone phosphate as substrates, resulting from enzyme-catalyzed isomerization of RBP and G3P, respectively. This chain is Pyridoxal 5'-phosphate synthase subunit Pdx1, found in Plasmodium berghei.